Here is a 224-residue protein sequence, read N- to C-terminus: uncharacterized protein (224 aa).

The S-adenosyl-L-methionine site is built by G177, I197, and L206.

Belongs to the class IV-like SAM-binding methyltransferase superfamily. RNA methyltransferase TrmH family.

This is an uncharacterized protein from Archaeoglobus fulgidus (strain ATCC 49558 / DSM 4304 / JCM 9628 / NBRC 100126 / VC-16).